A 177-amino-acid chain; its full sequence is Large ribosomal subunit protein uL6 (177 aa).

This sequence belongs to the universal ribosomal protein uL6 family. Part of the 50S ribosomal subunit.

This protein binds to the 23S rRNA, and is important in its secondary structure. It is located near the subunit interface in the base of the L7/L12 stalk, and near the tRNA binding site of the peptidyltransferase center. The protein is Large ribosomal subunit protein uL6 of Methanocella arvoryzae (strain DSM 22066 / NBRC 105507 / MRE50).